The sequence spans 341 residues: L-threonine 3-dehydrogenase (341 aa).

Zn(2+) is bound at residue C38. Active-site charge relay system residues include T40 and H43. The Zn(2+) site is built by H63, E64, C93, C96, C99, and C107. NAD(+) is bound by residues I175, D195, R200, 262–264, and 286–287; these read LGI and IY.

This sequence belongs to the zinc-containing alcohol dehydrogenase family. As to quaternary structure, homotetramer. Zn(2+) serves as cofactor.

It is found in the cytoplasm. It catalyses the reaction L-threonine + NAD(+) = (2S)-2-amino-3-oxobutanoate + NADH + H(+). The protein operates within amino-acid degradation; L-threonine degradation via oxydo-reductase pathway; glycine from L-threonine: step 1/2. Functionally, catalyzes the NAD(+)-dependent oxidation of L-threonine to 2-amino-3-ketobutyrate. The protein is L-threonine 3-dehydrogenase of Shewanella loihica (strain ATCC BAA-1088 / PV-4).